Here is a 294-residue protein sequence, read N- to C-terminus: Major pollen allergen Pha a 5.3 (294 aa).

The N-terminal stretch at 1–25 (MAVQKYTVALFLAMALVAGPAASYA) is a signal peptide.

It belongs to the Poa p IX/Phl p VI allergen family.

This is Major pollen allergen Pha a 5.3 from Phalaris aquatica (Canary grass).